The chain runs to 467 residues: Cytochrome c-552 (467 aa).

The first 27 residues, 1–27, serve as a signal peptide directing secretion; it reads MVKKLTGKSFALSALVAASFVAAGAMA. A heme c-binding site is contributed by H87. 3 residues coordinate heme: C115, C118, and K119. Positions 153, 156, 157, 195, 198, and 199 each coordinate heme c. Residues E201, Y202, K250, and Q252 each contribute to the Ca(2+) site. A substrate-binding site is contributed by Y202. H253 contacts substrate. Residues H264, C271, C274, H275, H290, C303, C306, H307, and H382 each contribute to the heme c site.

It belongs to the cytochrome c-552 family. Ca(2+) serves as cofactor. Heme c is required as a cofactor.

It localises to the periplasm. It carries out the reaction 6 Fe(III)-[cytochrome c] + NH4(+) + 2 H2O = 6 Fe(II)-[cytochrome c] + nitrite + 8 H(+). The protein operates within nitrogen metabolism; nitrate reduction (assimilation). In terms of biological role, catalyzes the reduction of nitrite to ammonia, consuming six electrons in the process. In Shewanella amazonensis (strain ATCC BAA-1098 / SB2B), this protein is Cytochrome c-552.